The chain runs to 196 residues: Protein LURP-one-related 8 (196 aa).

The protein belongs to the LOR family.

Its function is as follows. Might be related to the phospholipid scramblase and tubby-like superfamily of membrane tethered transcription factors. In Arabidopsis thaliana (Mouse-ear cress), this protein is Protein LURP-one-related 8.